Reading from the N-terminus, the 245-residue chain is Phosphoadenosine 5'-phosphosulfate reductase (245 aa).

Cys-239 serves as the catalytic Nucleophile; cysteine thiosulfonate intermediate.

This sequence belongs to the PAPS reductase family. CysH subfamily.

It is found in the cytoplasm. It carries out the reaction [thioredoxin]-disulfide + sulfite + adenosine 3',5'-bisphosphate + 2 H(+) = [thioredoxin]-dithiol + 3'-phosphoadenylyl sulfate. It functions in the pathway sulfur metabolism; hydrogen sulfide biosynthesis; sulfite from sulfate: step 3/3. In terms of biological role, catalyzes the formation of sulfite from phosphoadenosine 5'-phosphosulfate (PAPS) using thioredoxin as an electron donor. In Baumannia cicadellinicola subsp. Homalodisca coagulata, this protein is Phosphoadenosine 5'-phosphosulfate reductase.